Here is a 2529-residue protein sequence, read N- to C-terminus: Zinc finger FYVE domain-containing protein 26 (2529 aa).

Disordered regions lie at residues 584-650 (HLPE…PGPH), 689-709 (SSHR…SAAR), and 733-810 (VTSN…RFQT). A phosphoserine mark is found at Ser605 and Ser609. Positions 689–701 (SSHRTPEETKLPE) are enriched in basic and acidic residues. Residues 755–765 (SSLRRGRRTRR) show a composition bias toward basic residues. A compositionally biased stretch (low complexity) spans 778-796 (SLEGTSSELSTSTSEGSLS). The residue at position 791 (Ser791) is a Phosphoserine. The span at 797–810 (AVSGQVESDSRFQT) shows a compositional bias: polar residues. Positions 859-884 (MFVERYQEVIQELARVEHKIENQNSD) form a coiled coil. A disordered region spans residues 1258–1286 (GLPLSTLGSPRPSENPSAERKSHSSPKDS). The span at 1263 to 1273 (TLGSPRPSENP) shows a compositional bias: polar residues. The span at 1274 to 1283 (SAERKSHSSP) shows a compositional bias: basic and acidic residues. Residues 1488-1515 (VSDMAVQEELKSELQRKLMELRVYQKIL) adopt a coiled-coil conformation. 4 positions are modified to phosphoserine: Ser1732, Ser1754, Ser1770, and Ser1772. Residues 1762–1799 (APGSALVRSPSPKERAFPQTQPPVEFVPPETPPARDQW) form a disordered region. The FYVE-type zinc finger occupies 1802-1862 (DETESVCMVC…VCDQCYSYYN (61 aa)). Zn(2+) contacts are provided by Cys1808, Cys1811, Cys1825, Cys1828, Cys1833, Cys1836, Cys1854, and Cys1857. The segment at 1865 to 1884 (TPEESPCQSEVPDSAKNESP) is disordered.

Belongs to the ZFYVE26 family. As to quaternary structure, interacts with AP5Z1, AP5B1, AP5S1 and SPG11. Interacts with TTC19 and KIF13A.

Its subcellular location is the cytoplasm. It is found in the cytoskeleton. The protein localises to the microtubule organizing center. The protein resides in the centrosome. It localises to the midbody. Its function is as follows. Phosphatidylinositol 3-phosphate-binding protein required for the abscission step in cytokinesis: recruited to the midbody during cytokinesis and acts as a regulator of abscission. May also be required for efficient homologous recombination DNA double-strand break repair. This is Zinc finger FYVE domain-containing protein 26 (Zfyve26) from Mus musculus (Mouse).